Consider the following 319-residue polypeptide: UDP-N-acetylenolpyruvoylglucosamine reductase (319 aa).

The 164-residue stretch at 35–198 (VGGPAEAMFK…TGCVLAGRPD (164 aa)) folds into the FAD-binding PCMH-type domain. Arg178 is a catalytic residue. Ser227 functions as the Proton donor in the catalytic mechanism. The active site involves Glu302.

Belongs to the MurB family. It depends on FAD as a cofactor.

Its subcellular location is the cytoplasm. The catalysed reaction is UDP-N-acetyl-alpha-D-muramate + NADP(+) = UDP-N-acetyl-3-O-(1-carboxyvinyl)-alpha-D-glucosamine + NADPH + H(+). The protein operates within cell wall biogenesis; peptidoglycan biosynthesis. Cell wall formation. This chain is UDP-N-acetylenolpyruvoylglucosamine reductase, found in Rhodospirillum rubrum (strain ATCC 11170 / ATH 1.1.1 / DSM 467 / LMG 4362 / NCIMB 8255 / S1).